The following is a 278-amino-acid chain: UPF0761 membrane protein NT05HA_1801 (278 aa).

The next 6 membrane-spanning stretches (helical) occupy residues 32–52 (MLAI…FPVF), 88–108 (QMSA…INSI), 123–143 (PIFT…LLVG), 168–188 (LLSF…YMVV), 203–223 (LIAA…IVTF), and 232–252 (AMAT…FVLL).

This sequence belongs to the UPF0761 family.

Its subcellular location is the cell inner membrane. The chain is UPF0761 membrane protein NT05HA_1801 from Aggregatibacter aphrophilus (strain NJ8700) (Haemophilus aphrophilus).